The primary structure comprises 155 residues: Ribosome maturation factor RimP (155 aa).

It belongs to the RimP family.

The protein localises to the cytoplasm. Required for maturation of 30S ribosomal subunits. The chain is Ribosome maturation factor RimP from Listeria monocytogenes serotype 4a (strain HCC23).